Here is a 369-residue protein sequence, read N- to C-terminus: Probable serine/threonine-protein kinase DDB_G0291350 (369 aa).

In terms of domain architecture, Protein kinase spans 22–367; that stretch reads YTVNRILGEG…QVIERINQII (346 aa). Residues 28-36 and Lys-51 contribute to the ATP site; that span reads LGEGGFSFV. Asp-159 serves as the catalytic Proton acceptor. The tract at residues 169–225 is disordered; that stretch reads NLRRPSNNNNNNNNNNNNNNNNNNNNNNNNNNNNNNNNNNNNNNNNNNNNNNNSEDS. The segment covering 175–221 has biased composition (low complexity); sequence NNNNNNNNNNNNNNNNNNNNNNNNNNNNNNNNNNNNNNNNNNNNNNN.

The protein belongs to the protein kinase superfamily. Ser/Thr protein kinase family.

It catalyses the reaction L-seryl-[protein] + ATP = O-phospho-L-seryl-[protein] + ADP + H(+). The catalysed reaction is L-threonyl-[protein] + ATP = O-phospho-L-threonyl-[protein] + ADP + H(+). The sequence is that of Probable serine/threonine-protein kinase DDB_G0291350 from Dictyostelium discoideum (Social amoeba).